Consider the following 195-residue polypeptide: Imidazoleglycerol-phosphate dehydratase (195 aa).

It belongs to the imidazoleglycerol-phosphate dehydratase family.

The protein resides in the cytoplasm. The catalysed reaction is D-erythro-1-(imidazol-4-yl)glycerol 3-phosphate = 3-(imidazol-4-yl)-2-oxopropyl phosphate + H2O. Its pathway is amino-acid biosynthesis; L-histidine biosynthesis; L-histidine from 5-phospho-alpha-D-ribose 1-diphosphate: step 6/9. The sequence is that of Imidazoleglycerol-phosphate dehydratase from Cupriavidus metallidurans (strain ATCC 43123 / DSM 2839 / NBRC 102507 / CH34) (Ralstonia metallidurans).